A 466-amino-acid polypeptide reads, in one-letter code: ATP synthase subunit beta (466 aa).

155–162 (GGAGVGKT) contributes to the ATP binding site.

It belongs to the ATPase alpha/beta chains family. In terms of assembly, F-type ATPases have 2 components, CF(1) - the catalytic core - and CF(0) - the membrane proton channel. CF(1) has five subunits: alpha(3), beta(3), gamma(1), delta(1), epsilon(1). CF(0) has three main subunits: a(1), b(2) and c(9-12). The alpha and beta chains form an alternating ring which encloses part of the gamma chain. CF(1) is attached to CF(0) by a central stalk formed by the gamma and epsilon chains, while a peripheral stalk is formed by the delta and b chains.

The protein resides in the cell inner membrane. It catalyses the reaction ATP + H2O + 4 H(+)(in) = ADP + phosphate + 5 H(+)(out). Produces ATP from ADP in the presence of a proton gradient across the membrane. The catalytic sites are hosted primarily by the beta subunits. The sequence is that of ATP synthase subunit beta from Bordetella bronchiseptica (strain ATCC BAA-588 / NCTC 13252 / RB50) (Alcaligenes bronchisepticus).